The following is a 279-amino-acid chain: MKRKTSPILSWLLTIGFAFIAFIAVFPLLNLILASFRPSTELMRNGITLIFDPSTLTLDNFIYIFTEAGLYWTWFGNSVWISIVIVVLSLLFSSMVGYALAVYDFKGRNFFFLLVLIILMIPFEILMLPLFQLMIKLQLVNTYTAVILPAIVAPIAVFFFRQYALGLPKELMDAARIDGCTEYGIFFKIMLPLMGPSLAAMAILQGLNSWNNFLWPLVVLRSNDMFTLPIGLATLLTPYGNNYDILLAGSVMTIVPIVILFIFFQRYFIAGLTVGGVKG.

The next 6 membrane-spanning stretches (helical) occupy residues 8–28 (ILSWLLTIGFAFIAFIAVFPL), 79–99 (VWISIVIVVLSLLFSSMVGYA), 110–130 (FFFLLVLIILMIPFEILMLPL), 140–160 (VNTYTAVILPAIVAPIAVFFF), 184–204 (GIFFKIMLPLMGPSLAAMAIL), and 245–265 (ILLAGSVMTIVPIVILFIFFQ). Positions 75 to 264 (FGNSVWISIV…VPIVILFIFF (190 aa)) constitute an ABC transmembrane type-1 domain.

This sequence belongs to the binding-protein-dependent transport system permease family. MalFG subfamily. The complex is composed of two ATP-binding proteins (MsmX), two transmembrane proteins (AraP and AraQ) and a solute-binding protein (AraN).

It is found in the cell membrane. Its function is as follows. Part of the ABC transporter complex AraNPQ involved in the uptake of arabinooligosaccharides. Responsible for the translocation of the substrate across the membrane. The sequence is that of Arabinooligosaccharides transport system permease protein AraQ (araQ) from Halalkalibacterium halodurans (strain ATCC BAA-125 / DSM 18197 / FERM 7344 / JCM 9153 / C-125) (Bacillus halodurans).